The chain runs to 677 residues: Penicillin-binding protein activator LpoA (677 aa).

Residues Met-1–Ala-26 form the signal peptide. A lipid anchor (N-palmitoyl cysteine) is attached at Cys-27. Cys-27 carries S-diacylglycerol cysteine lipidation. Residues Gln-309 to Tyr-359 are disordered. Over residues Ala-313 to Gln-355 the composition is skewed to low complexity.

It belongs to the LpoA family. In terms of assembly, interacts with PBP1a.

It localises to the cell outer membrane. Regulator of peptidoglycan synthesis that is essential for the function of penicillin-binding protein 1A (PBP1a). This is Penicillin-binding protein activator LpoA from Pantoea ananatis (strain LMG 20103).